We begin with the raw amino-acid sequence, 394 residues long: Phosphopentomutase (394 aa).

Mn(2+)-binding residues include D13, D286, H291, D327, H328, and H339.

This sequence belongs to the phosphopentomutase family. It depends on Mn(2+) as a cofactor.

It localises to the cytoplasm. It catalyses the reaction 2-deoxy-alpha-D-ribose 1-phosphate = 2-deoxy-D-ribose 5-phosphate. The enzyme catalyses alpha-D-ribose 1-phosphate = D-ribose 5-phosphate. Its pathway is carbohydrate degradation; 2-deoxy-D-ribose 1-phosphate degradation; D-glyceraldehyde 3-phosphate and acetaldehyde from 2-deoxy-alpha-D-ribose 1-phosphate: step 1/2. Functionally, isomerase that catalyzes the conversion of deoxy-ribose 1-phosphate (dRib-1-P) and ribose 1-phosphate (Rib-1-P) to deoxy-ribose 5-phosphate (dRib-5-P) and ribose 5-phosphate (Rib-5-P), respectively. This is Phosphopentomutase from Bacillus mycoides (strain KBAB4) (Bacillus weihenstephanensis).